Consider the following 187-residue polypeptide: Ribosome-recycling factor (187 aa).

The protein belongs to the RRF family.

The protein resides in the cytoplasm. Functionally, responsible for the release of ribosomes from messenger RNA at the termination of protein biosynthesis. May increase the efficiency of translation by recycling ribosomes from one round of translation to another. The chain is Ribosome-recycling factor from Roseobacter denitrificans (strain ATCC 33942 / OCh 114) (Erythrobacter sp. (strain OCh 114)).